Reading from the N-terminus, the 571-residue chain is Zinc finger protein 181 (571 aa).

The KRAB domain occupies 4–76 (VTFNDVAIDF…EKKLSKGMIP (73 aa)). Glycyl lysine isopeptide (Lys-Gly) (interchain with G-Cter in SUMO2) cross-links involve residues K109 and K126. 11 consecutive C2H2-type zinc fingers follow at residues 237–259 (YTCS…WRIH), 265–287 (YECR…LISH), 293–315 (YKCI…QSTH), 321–343 (YECM…LRIH), 349–371 (YECR…QKIH), 377–399 (YECR…QRIH), 405–427 (YECN…QSIH), 433–455 (FECQ…LRNH), 461–483 (YECS…HRIH), 489–511 (YECI…QRIH), and 517–539 (YKCN…QRVH).

It belongs to the krueppel C2H2-type zinc-finger protein family.

It is found in the nucleus. Its function is as follows. May be involved in transcriptional regulation. In Homo sapiens (Human), this protein is Zinc finger protein 181 (ZNF181).